Here is a 409-residue protein sequence, read N- to C-terminus: Multifunctional CCA protein (409 aa).

The ATP site is built by Gly-8 and Arg-11. Positions 8 and 11 each coordinate CTP. Mg(2+) is bound by residues Asp-21 and Asp-23. Positions 91, 137, and 140 each coordinate ATP. CTP contacts are provided by Arg-91, Arg-137, and Arg-140. The HD domain occupies 228 to 329; that stretch reads TGVHTLSVLE…LELLQSFDVY (102 aa).

The protein belongs to the tRNA nucleotidyltransferase/poly(A) polymerase family. Bacterial CCA-adding enzyme type 1 subfamily. Monomer. Can also form homodimers and oligomers. Mg(2+) serves as cofactor. Ni(2+) is required as a cofactor.

The catalysed reaction is a tRNA precursor + 2 CTP + ATP = a tRNA with a 3' CCA end + 3 diphosphate. The enzyme catalyses a tRNA with a 3' CCA end + 2 CTP + ATP = a tRNA with a 3' CCACCA end + 3 diphosphate. In terms of biological role, catalyzes the addition and repair of the essential 3'-terminal CCA sequence in tRNAs without using a nucleic acid template. Adds these three nucleotides in the order of C, C, and A to the tRNA nucleotide-73, using CTP and ATP as substrates and producing inorganic pyrophosphate. tRNA 3'-terminal CCA addition is required both for tRNA processing and repair. Also involved in tRNA surveillance by mediating tandem CCA addition to generate a CCACCA at the 3' terminus of unstable tRNAs. While stable tRNAs receive only 3'-terminal CCA, unstable tRNAs are marked with CCACCA and rapidly degraded. The protein is Multifunctional CCA protein of Pseudomonas fluorescens (strain SBW25).